The sequence spans 283 residues: MKLVIVSGRSGSGKSVALRVLEDLGYYCVDNLPLQLIGPLLAQLKGNNDKVAISIDIRNMPEQEKALEKELARLPEGVELTSFFLNSSDKVLLKRYSETRRLHPLSRSKVSLQEAIKLEGKMLAPISNMVDHFIDTSNLNVYELADAVRQILLGRTDKELVIIFESFGFKHGMPTEADFMFDARFLPNPHWEPELRPLTGLDEPVKLFLERQVLVNKYIWQIENLLETWLPHLERNNRSYLTIAIGCTGGQHRSVYIAEQLAKRFANSHHKVEARHRELNAKA.

8-15 (GRSGSGKS) contacts ATP. 56 to 59 (DIRN) contributes to the GTP binding site.

The protein belongs to the RapZ-like family.

In terms of biological role, displays ATPase and GTPase activities. The sequence is that of Nucleotide-binding protein Sama_3091 from Shewanella amazonensis (strain ATCC BAA-1098 / SB2B).